The following is a 109-amino-acid chain: Iron-sulfur cluster assembly protein CyaY (109 aa).

It belongs to the frataxin family.

Functionally, involved in iron-sulfur (Fe-S) cluster assembly. May act as a regulator of Fe-S biogenesis. This Shewanella baltica (strain OS155 / ATCC BAA-1091) protein is Iron-sulfur cluster assembly protein CyaY.